A 1447-amino-acid chain; its full sequence is Inositol 1,4,5-triphosphate receptor associated 2 (1447 aa).

At Met-1–Gly-1388 the chain is on the cytoplasmic side. Disordered stretches follow at residues Val-64–Pro-96 and Leu-420–Met-439. Over residues Ser-71–Thr-92 the composition is skewed to polar residues. Coiled coils occupy residues Phe-354–Ser-518 and Thr-665–Glu-731. Low complexity predominate over residues Leu-420–Arg-436. 5 disordered regions span residues Lys-790–Gln-828, Lys-841–Arg-860, Pro-991–Asp-1132, Asn-1267–Asn-1289, and Asp-1355–Arg-1379. Residues Val-800–Gly-812 are compositionally biased toward basic and acidic residues. The segment covering Lys-1021–Ala-1035 has biased composition (polar residues). Basic and acidic residues-rich tracts occupy residues Ser-1037 to Thr-1049 and Lys-1080 to Glu-1096. The necessary for spindle and spindle pole localization stretch occupies residues Arg-1076 to Thr-1265. Positions Thr-1110–Asp-1119 are enriched in polar residues. The span at Ser-1120–Asp-1132 shows a compositional bias: basic and acidic residues. Residues Leu-1359 to Ala-1371 show a composition bias toward polar residues. The interval Gly-1388–Val-1447 is necessary for nuclear membrane localization. Residues Ile-1389 to Leu-1409 form a helical; Anchor for type IV membrane protein membrane-spanning segment. The Lumenal portion of the chain corresponds to Met-1410–Val-1447.

The protein belongs to the IRAG2 family.

It localises to the endoplasmic reticulum membrane. It is found in the nucleus envelope. The protein localises to the cytoplasm. The protein resides in the cytoskeleton. Its subcellular location is the microtubule organizing center. It localises to the centrosome. It is found in the spindle pole. The protein localises to the chromosome. Functionally, a maternally expressed membrane and cytoskeletal linker protein, which is essential for attachment of the centrosome to the male pronucleus. Promotes male and female pronucleus congression and subsequent fusion after fertilization. Congression is mediated by the sperm aster microtubules. The chain is Inositol 1,4,5-triphosphate receptor associated 2 (irag2) from Danio rerio (Zebrafish).